A 203-amino-acid chain; its full sequence is MTSAVGTSGTAITSRVHSLNRPNMVSVGTIVWLSSELMFFAGLFAFYFSARAQAGGNWPPPPTELNLYQAVPVTLVLIASSFTCQMGVFAAERGDIFGLRRWYVITFLMGLFFVLGQAYEYRNLMSHGTSIPSSAYGSVFYLATGFHGLHVTGGLIAFIFLLVRTGMSKFTPAQATASIVVSYYWHFVDIVWIALFTVIYFIR.

5 helical membrane-spanning segments follow: residues 30 to 50, 71 to 91, 96 to 116, 143 to 163, and 179 to 199; these read IVWL…YFSA, VPVT…VFAA, IFGL…FVLG, ATGF…FLLV, and IVVS…FTVI.

Belongs to the cytochrome c oxidase subunit 3 family.

The protein localises to the cell membrane. It carries out the reaction 4 Fe(II)-[cytochrome c] + O2 + 8 H(+)(in) = 4 Fe(III)-[cytochrome c] + 2 H2O + 4 H(+)(out). The sequence is that of Probable cytochrome c oxidase subunit 3 (ctaE) from Mycobacterium bovis (strain ATCC BAA-935 / AF2122/97).